Reading from the N-terminus, the 126-residue chain is Large-conductance mechanosensitive channel (126 aa).

2 helical membrane-spanning segments follow: residues Val-14–Leu-34 and Gly-67–Val-87.

It belongs to the MscL family. As to quaternary structure, homopentamer.

The protein localises to the cell membrane. Channel that opens in response to stretch forces in the membrane lipid bilayer. May participate in the regulation of osmotic pressure changes within the cell. The chain is Large-conductance mechanosensitive channel from Lactiplantibacillus plantarum (strain ATCC BAA-793 / NCIMB 8826 / WCFS1) (Lactobacillus plantarum).